Reading from the N-terminus, the 358-residue chain is Alanine racemase (358 aa).

K34 serves as the catalytic Proton acceptor; specific for D-alanine. The residue at position 34 (K34) is an N6-(pyridoxal phosphate)lysine. R129 contributes to the substrate binding site. The active-site Proton acceptor; specific for L-alanine is the Y254. M302 is a binding site for substrate.

The protein belongs to the alanine racemase family. Pyridoxal 5'-phosphate is required as a cofactor.

It carries out the reaction L-alanine = D-alanine. The protein operates within amino-acid biosynthesis; D-alanine biosynthesis; D-alanine from L-alanine: step 1/1. Functionally, catalyzes the interconversion of L-alanine and D-alanine. May also act on other amino acids. The polypeptide is Alanine racemase (alr) (Hamiltonella defensa subsp. Acyrthosiphon pisum (strain 5AT)).